We begin with the raw amino-acid sequence, 876 residues long: uncharacterized protein (876 aa).

Over residues 37 to 48 (DEDKSNNDDRRS) the composition is skewed to basic and acidic residues. Disordered regions lie at residues 37–67 (DEDK…KGSN), 112–155 (DESG…RNIK), 226–254 (KKKS…TKSQ), and 330–353 (MMMD…SRSI). S48 and S51 each carry phosphoserine. The segment covering 49 to 58 (LASILDSSSS) has biased composition (low complexity). Residues 115–131 (GFTSDNNADYFSGNSYS) are compositionally biased toward polar residues. A phosphoserine mark is found at S360, S510, S552, and S577. Positions 490–513 (PEVTKQKNTSGPKPGFSHSKSADA) are disordered. Disordered regions lie at residues 661–728 (ITGG…RSPQ) and 750–876 (RHSL…FGRL). Residues 689–699 (SKSKSRSSSKS) show a composition bias toward basic residues. Residues 717–726 (SSASASRSRS) show a composition bias toward low complexity. The residue at position 775 (S775) is a Phosphoserine. Low complexity-rich tracts occupy residues 794 to 808 (NKDS…SSSL) and 842 to 854 (FSFF…SPSS).

This is an uncharacterized protein from Saccharomyces cerevisiae (strain ATCC 204508 / S288c) (Baker's yeast).